A 74-amino-acid polypeptide reads, in one-letter code: MLEGAKLMGAGAATIALAGAAIGIGNVFSSLIHSVARNPSLAKQLFGYAILGFALTEAIALFALMMAFLILFVF.

2 helical membrane-spanning segments follow: residues 8 to 28 (MGAG…GNVF) and 50 to 70 (ILGF…AFLI).

It belongs to the ATPase C chain family. As to quaternary structure, F-type ATPases have 2 components, CF(1) - the catalytic core - and CF(0) - the membrane proton channel. CF(1) has five subunits: alpha(3), beta(3), gamma(1), delta(1), epsilon(1). CF(0) has three main subunits: a, b and c.

Its subcellular location is the mitochondrion membrane. Its function is as follows. This protein is one of the chains of the nonenzymatic membrane component (F0) of mitochondrial ATPase. This chain is ATP synthase subunit 9, mitochondrial (ATP9), found in Solanum tuberosum (Potato).